Consider the following 31-residue polypeptide: Aspartate aminotransferase, cytoplasmic (31 aa).

Belongs to the class-I pyridoxal-phosphate-dependent aminotransferase family. Homodimer. Pyridoxal 5'-phosphate is required as a cofactor.

Its subcellular location is the cytoplasm. It catalyses the reaction L-aspartate + 2-oxoglutarate = oxaloacetate + L-glutamate. It carries out the reaction L-cysteine + 2-oxoglutarate = 2-oxo-3-sulfanylpropanoate + L-glutamate. The enzyme catalyses (2S)-2-aminobutanoate + 2-oxoglutarate = 2-oxobutanoate + L-glutamate. The catalysed reaction is 3-sulfino-L-alanine + 2-oxoglutarate = 3-sulfinopyruvate + L-glutamate. Its function is as follows. Biosynthesis of L-glutamate from L-aspartate or L-cysteine. Important regulator of levels of glutamate, the major excitatory neurotransmitter of the vertebrate central nervous system. Acts as a scavenger of glutamate in brain neuroprotection. The aspartate aminotransferase activity is involved in hepatic glucose synthesis during development and in adipocyte glyceroneogenesis. Using L-cysteine as substrate, regulates levels of mercaptopyruvate, an important source of hydrogen sulfide. Mercaptopyruvate is converted into H(2)S via the action of 3-mercaptopyruvate sulfurtransferase (3MST). Hydrogen sulfide is an important synaptic modulator and neuroprotectant in the brain. This chain is Aspartate aminotransferase, cytoplasmic, found in Oryctolagus cuniculus (Rabbit).